Consider the following 682-residue polypeptide: Kinesin-like protein KIF2A (682 aa).

The segment at 1 to 192 (MVTSLNEDSE…LDYRPLTTSD (192 aa)) is globular. The tract at residues 39-129 (LAPDEEIDPG…GKKDFGLASR (91 aa)) is disordered. Polar residues predominate over residues 99–115 (IEQSASRQQNGSVSDIS). In terms of domain architecture, Kinesin motor spans 198 to 528 (RICVCVRKRP…LRYANRVKEL (331 aa)). 288-295 (GQTGSGKT) contacts ATP. Residues 638–673 (QLEAILEKKIDILTELRDKVKSFRAALQEEEHASKQ) are a coiled coil.

The protein belongs to the TRAFAC class myosin-kinesin ATPase superfamily. Kinesin family. MCAK/KIF2 subfamily. Interacts with aurka and plk1. Post-translationally, phosphorylation by plk1 promotes location at spindle microtubules and spindle poles, and enhances its microtubule depolymerization activity. In terms of processing, phosphorylation by AURKA interferes with location at spindle microtubules and spindle poles, and inhibits its microtubule depolymerization activity.

Its subcellular location is the cytoplasm. It localises to the cytoskeleton. It is found in the microtubule organizing center. The protein localises to the centrosome. The protein resides in the spindle pole. Its subcellular location is the spindle. In terms of biological role, plus end-directed microtubule-dependent motor. May regulate microtubule dynamics during axonal growth. Required for normal progression through mitosis. Required for normal congress of chromosomes at the metaphase plate. Required for normal spindle dynamics during mitosis. Promotes spindle turnover. Implicated in formation of bipolar mitotic spindles Has microtubule depolymerization activity. This Xenopus laevis (African clawed frog) protein is Kinesin-like protein KIF2A (kif2a).